A 461-amino-acid polypeptide reads, in one-letter code: Lysosomal proton-coupled steroid conjugate and bile acid symporter SLC46A3 (461 aa).

An N-terminal signal peptide occupies residues 1–25 (MKISFIEPAILLYAFAMTLTIPLTA). Residues 26 to 70 (QYVYRRIWEETGNYTFTSSSNVSECEQNKSSSTFAFQEEVQKKAS) lie on the Extracellular side of the membrane. Asn38, Asn46, and Asn53 each carry an N-linked (GlcNAc...) asparagine glycan. Residues 71 to 91 (LFSLQVEISGLIPGLVSTFML) traverse the membrane as a helical segment. Topologically, residues 92 to 103 (LSSSDNHGRKLP) are cytoplasmic. Residues 104-124 (MVLSSLGSLGTNLWLCAMSYF) traverse the membrane as a helical segment. Over 125–135 (DLPLQLLVAST) the chain is Extracellular. A helical transmembrane segment spans residues 136-156 (FIGALFGNYTTFWGACFAYIV). Residues 157 to 170 (DQEKEYKHRIIRIA) lie on the Cytoplasmic side of the membrane. The helical transmembrane segment at 171-191 (VLDFMLGVVTGLTGLSSGYFI) threads the bilayer. The Extracellular segment spans residues 192–197 (RELGFA). The chain crosses the membrane as a helical span at residues 198–218 (WSYFIIAVVVLVNLAYILFFL). The Cytoplasmic portion of the chain corresponds to 219-260 (SDPIKESSSQIVTMSCSESLKDLFYRTYMLFKNGSCKRRSLL). A helical membrane pass occupies residues 261–281 (CLLIFTLVVYFFVVFGITPVF). The Extracellular segment spans residues 282–301 (TLYELGPPLCWNEVYIGYGS). The chain crosses the membrane as a helical span at residues 302 to 322 (ALGSLSFLSSFLGIWLFSYCL). Residues 323 to 324 (KD) are Cytoplasmic-facing. A helical membrane pass occupies residues 325-345 (IHIAYVGIFTTMVGMMLTAFT). At 346-347 (RT) the chain is on the extracellular side. The chain crosses the membrane as a helical span at residues 348–368 (TLMMFLVRISFFFTIMPLSIL). The Cytoplasmic portion of the chain corresponds to 369 to 381 (RSMLSKVVHSTEQ). The helical transmembrane segment at 382-402 (GVLFACIAFLETLGGVTSTSA) threads the bilayer. The Extracellular portion of the chain corresponds to 403–415 (YNGIYSATVAWYP). A helical membrane pass occupies residues 416–436 (GFVFLLSAGLLVLPAVSLCMV). Residues 437-461 (KCIGWEEGSYTLLIHDEPSEHTSDS) are Cytoplasmic-facing. A Tyrosine-based lysosomal-sorting motif motif is present at residues 446-449 (YTLL).

The protein belongs to the major facilitator superfamily. SLC46A family.

The protein localises to the lysosome membrane. It catalyses the reaction estrone 3-sulfate(out) + n H(+)(out) = estrone 3-sulfate(in) + n H(+)(in). The catalysed reaction is 25-hydroxyvitamin D3 sulfate(out) + n H(+)(out) = 25-hydroxyvitamin D3 sulfate(in) + n H(+)(in). It carries out the reaction cholate(out) + n H(+)(out) = cholate(in) + n H(+)(in). The enzyme catalyses glycocholate(out) + n H(+)(out) = glycocholate(in) + n H(+)(in). It catalyses the reaction taurocholate(out) + n H(+)(out) = taurocholate(in) + n H(+)(in). The catalysed reaction is dehydroepiandrosterone 3-sulfate(out) + n H(+)(out) = dehydroepiandrosterone 3-sulfate(in) + n H(+)(in). It carries out the reaction N-acetyl-D-muramoyl-L-alanyl-D-isoglutamine(out) + n H(+)(out) = N-acetyl-D-muramoyl-L-alanyl-D-isoglutamine(in) + n H(+)(in). The enzyme catalyses 2',3'-cGAMP(out) + n H(+)(out) = 2',3'-cGAMP(in) + n H(+)(in). Functionally, lysosomal proton-coupled steroid conjugate and bile acid transporter. Preferentially recognizes lipophilic steroid conjugates or bile acis as endogenous substrates and seems to mediate escape from lysosomes to the cytoplasm. Modulates hepatic cytosolic copper homeostasis, maybe acting as a lysosomal copper transporter and sequestering copper ions in the lysosome. Delivers pathogen-associated molecular patterns to cytosolic pattern recognition receptors as part of the innate immune response to microbes. Selectively transports bacterial muramyl dipeptide (MDP) into the cytosol for recognition by NOD2, triggering inflammatory responses. Likely acts as a redundant importer of cyclic GMP-AMP dinucleotides (cGAMPs) in monocyte and macrophage cell lineages. The transport mechanism, its electrogenicity and stoichiometry remain to be elucidated. The sequence is that of Lysosomal proton-coupled steroid conjugate and bile acid symporter SLC46A3 (Slc46a3) from Rattus norvegicus (Rat).